Reading from the N-terminus, the 164-residue chain is UPF0114 protein Sbal223_3668 (164 aa).

Transmembrane regions (helical) follow at residues 15–35, 53–73, 108–128, and 136–156; these read IMAP…IKFF, LVLV…IVMV, KVAA…FMDV, and IMWY…MGYL.

The protein belongs to the UPF0114 family.

The protein localises to the cell membrane. The polypeptide is UPF0114 protein Sbal223_3668 (Shewanella baltica (strain OS223)).